The chain runs to 354 residues: Uroporphyrinogen decarboxylase (354 aa).

Substrate is bound by residues 27 to 31 (RQAGR), aspartate 77, tyrosine 154, serine 209, and histidine 327.

The protein belongs to the uroporphyrinogen decarboxylase family. In terms of assembly, homodimer.

It localises to the cytoplasm. It catalyses the reaction uroporphyrinogen III + 4 H(+) = coproporphyrinogen III + 4 CO2. It functions in the pathway porphyrin-containing compound metabolism; protoporphyrin-IX biosynthesis; coproporphyrinogen-III from 5-aminolevulinate: step 4/4. Functionally, catalyzes the decarboxylation of four acetate groups of uroporphyrinogen-III to yield coproporphyrinogen-III. This is Uroporphyrinogen decarboxylase from Shewanella denitrificans (strain OS217 / ATCC BAA-1090 / DSM 15013).